A 542-amino-acid chain; its full sequence is Phosphoglucomutase (542 aa).

Residues Thr17, Arg21, 112–113 (SH), and Lys125 each bind substrate. Ser112 (phosphoserine intermediate) is an active-site residue. Ser112 contacts Mg(2+). Asp276, Asp278, and Asp280 together coordinate Mg(2+). Residues 280 to 281 (DR), Thr343, 362 to 364 (EES), Lys375, and Arg495 each bind substrate.

Belongs to the phosphohexose mutase family. Mg(2+) is required as a cofactor.

It catalyses the reaction alpha-D-glucose 1-phosphate = alpha-D-glucose 6-phosphate. Functionally, this enzyme participates in both the breakdown and synthesis of glucose. Required for the synthesis of capsular polysaccharide and normal lipopolysaccharide. The protein is Phosphoglucomutase (pgm) of Rhizobium radiobacter (Agrobacterium tumefaciens).